We begin with the raw amino-acid sequence, 202 residues long: Energy-coupling factor transporter transmembrane protein BioN (202 aa).

The next 3 helical transmembrane spans lie at 21–40 (LLSLTAFAILLFISHNLLLL), 44–63 (VLVAAVLYGTVGLPIGEALL), and 68–90 (IFLTIAVVALFNLIFNPWQAALV).

Belongs to the CbiQ family. As to quaternary structure, part of a biotin transporter complex composed of BioM, BioN and BioY.

It is found in the cell inner membrane. Its function is as follows. Involved in biotin uptake. The polypeptide is Energy-coupling factor transporter transmembrane protein BioN (bioN) (Rhizobium etli (strain ATCC 51251 / DSM 11541 / JCM 21823 / NBRC 15573 / CFN 42)).